Reading from the N-terminus, the 23-residue chain is Acidic phospholipase A2 CHA-E6b (23 aa).

It belongs to the phospholipase A2 family. Group II subfamily. D49 sub-subfamily. Ca(2+) serves as cofactor. Contains 7 disulfide bonds. As to expression, expressed by the venom gland.

It localises to the secreted. It catalyses the reaction a 1,2-diacyl-sn-glycero-3-phosphocholine + H2O = a 1-acyl-sn-glycero-3-phosphocholine + a fatty acid + H(+). Functionally, snake venom phospholipase A2 (PLA2) that shows high lipolytic (1200 umol/mg/min) and weak ADP-induced platelet aggregation activities. Also shows weak anticoagulant activity (IC(50) of about 1.0 uM). PLA2 catalyzes the calcium-dependent hydrolysis of the 2-acyl groups in 3-sn-phosphoglycerides. The polypeptide is Acidic phospholipase A2 CHA-E6b (Crotalus horridus (Timber rattlesnake)).